A 366-amino-acid polypeptide reads, in one-letter code: Ribosomal RNA large subunit methyltransferase M (366 aa).

Residues Ser188, 221–224 (CPGG), Asp240, Asp260, and Asp277 contribute to the S-adenosyl-L-methionine site. Residue Lys306 is the Proton acceptor of the active site.

The protein belongs to the class I-like SAM-binding methyltransferase superfamily. RNA methyltransferase RlmE family. RlmM subfamily. Monomer.

The protein localises to the cytoplasm. It catalyses the reaction cytidine(2498) in 23S rRNA + S-adenosyl-L-methionine = 2'-O-methylcytidine(2498) in 23S rRNA + S-adenosyl-L-homocysteine + H(+). Catalyzes the 2'-O-methylation at nucleotide C2498 in 23S rRNA. The polypeptide is Ribosomal RNA large subunit methyltransferase M (Salmonella arizonae (strain ATCC BAA-731 / CDC346-86 / RSK2980)).